The following is a 226-amino-acid chain: ATP synthase F(0) complex subunit a (226 aa).

6 helical membrane-spanning segments follow: residues Phe-6 to Phe-26, Trp-68 to Leu-88, Gln-97 to Phe-117, Ile-138 to Val-158, Ile-164 to Ile-184, and Ala-189 to Ile-209.

It belongs to the ATPase A chain family. Component of the ATP synthase complex composed at least of ATP5F1A/subunit alpha, ATP5F1B/subunit beta, ATP5MC1/subunit c (homooctomer), MT-ATP6/subunit a, MT-ATP8/subunit 8, ATP5ME/subunit e, ATP5MF/subunit f, ATP5MG/subunit g, ATP5MK/subunit k, ATP5MJ/subunit j, ATP5F1C/subunit gamma, ATP5F1D/subunit delta, ATP5F1E/subunit epsilon, ATP5PF/subunit F6, ATP5PB/subunit b, ATP5PD/subunit d, ATP5PO/subunit OSCP. ATP synthase complex consists of a soluble F(1) head domain (subunits alpha(3) and beta(3)) - the catalytic core - and a membrane F(0) domain - the membrane proton channel (subunits c, a, 8, e, f, g, k and j). These two domains are linked by a central stalk (subunits gamma, delta, and epsilon) rotating inside the F1 region and a stationary peripheral stalk (subunits F6, b, d, and OSCP). Interacts with DNAJC30; interaction is direct.

The protein resides in the mitochondrion inner membrane. The catalysed reaction is H(+)(in) = H(+)(out). Subunit a, of the mitochondrial membrane ATP synthase complex (F(1)F(0) ATP synthase or Complex V) that produces ATP from ADP in the presence of a proton gradient across the membrane which is generated by electron transport complexes of the respiratory chain. ATP synthase complex consist of a soluble F(1) head domain - the catalytic core - and a membrane F(1) domain - the membrane proton channel. These two domains are linked by a central stalk rotating inside the F(1) region and a stationary peripheral stalk. During catalysis, ATP synthesis in the catalytic domain of F(1) is coupled via a rotary mechanism of the central stalk subunits to proton translocation. With the subunit c (ATP5MC1), forms the proton-conducting channel in the F(0) domain, that contains two crucial half-channels (inlet and outlet) that facilitate proton movement from the mitochondrial intermembrane space (IMS) into the matrix. Protons are taken up via the inlet half-channel and released through the outlet half-channel, following a Grotthuss mechanism. This is ATP synthase F(0) complex subunit a from Ictidomys tridecemlineatus (Thirteen-lined ground squirrel).